The sequence spans 694 residues: Polyphosphate kinase (694 aa).

Asn-45 contacts ATP. Mg(2+)-binding residues include Arg-367 and Arg-397. His-427 serves as the catalytic Phosphohistidine intermediate. 3 residues coordinate ATP: Tyr-460, Arg-553, and His-580.

This sequence belongs to the polyphosphate kinase 1 (PPK1) family. It depends on Mg(2+) as a cofactor. In terms of processing, an intermediate of this reaction is the autophosphorylated ppk in which a phosphate is covalently linked to a histidine residue through a N-P bond.

The catalysed reaction is [phosphate](n) + ATP = [phosphate](n+1) + ADP. In terms of biological role, catalyzes the reversible transfer of the terminal phosphate of ATP to form a long-chain polyphosphate (polyP). This is Polyphosphate kinase from Campylobacter jejuni subsp. doylei (strain ATCC BAA-1458 / RM4099 / 269.97).